The following is a 224-amino-acid chain: uncharacterized protein (224 aa).

Positions M1 to A17 are cleaved as a signal peptide.

This is an uncharacterized protein from Caenorhabditis elegans.